We begin with the raw amino-acid sequence, 3195 residues long: MWPPGLGTVVAAASRSQFDAMYEEMCYAMCVETSAAFLRACELAGPQAVQSQNVLDTILDQGAEITRTSVACETLPGGVKRYNMIDCQELPRLWRGSGQEPDMLLLHTTTFGNIPYDSTFDYEEKVLMLNGQQLGEKAAAMAREGAAAVLVIGNRGLGVAFTGGRHDPVFVFDPHGWMGGAAYMSRLPNPTSLTGFIADYVERRSGIVVTLTFLLWLYPDGWNIEQESPELRVEVISAALRAISQPPDFVFLDQFSETVVSPALPVPMGALRADRFAAKSIRAILARGTAPSPKKKPDSGEHGLPAGRPKPPKRHTPRSQNPALLDSTEKLSNLSPVKVKKPNKGKKMSVIAEPPSAAARTEQRGPGDSLGALAERPPWRLQGVRAAADVIAVPAASALAGLPEKPSDKLRGVLKYLPEAPTGGLSLGSGNALWAAILGTRVASLTDRLLVFLVENGITIRKAESEVGFLLDPVLAALAHRPDRGAVASLIGDTRLNLFALVARKAALLRLTELRDDRVSAVLVHKVQQVSSAIVSDTKTISAKLGALVDEISSEHPADAYGTLEKELLAFSLEKTAVVERPDETTAPILELVERAAEIVDAIEKETRAKAEREDRARRADEKLLAFAHSVWDEIDDIAGDVTRGVDVGSSQASAAASLAKRERIDIPEPSSMPPREDYSELKILDDKAKANAQKITDSAGKMLKVYANVIDYSISAFTSGTQSAIGRFALASPALDHMKAWLDRIAYADTLVDSLAGLTGRRESASPDWGRLSSLEPVRILEGLIETGADLSSDENLNHWTFQLFGAHAAGFMPSPSKWISAIHGINTRAHEVGLSATALAELETEIKAAEAMVADPGVRLECAKHALESAKAAVAGKSDPEQKARLAAAQARAAKLVDSCQRDLDEAKRLVDEATKRDAEIKKAAAALLRPVEKYQGLRGLGRSMAAAGLSDDAVAGIVAADTQVARVLRADAEAILANYERDFAELRGAQLLGTSAPLLRAVNFIDPRSGLGLLEPGSRIFLSEANDDLMDAVEDARTTRNTDSCSRAISALERIKWVIVEAEGAGQWPKFAVAAARALEGLRAKALIDDRAGLVRTTLAGMLKRAAIVSETVAKDTDDPEAAAERALKFVEMARRELRELELTDAEELSSQDYVALERALVELAEASRQKSIGLKKHAWRSRLRTLLERDRDDGEFSLDAWDQARDEGECYGGRDAVNDDLIKLARAVIDGRIQLGLRLVRAFFANNPYAAQASQALPGDARGPVELLESIRVAKWIFAFPGVADTYEYLFGISVVKLKALCEIGEEIVEAFDAAGSSDKNIDMHAFVQTVAGKLFQVSELTEFFDFYVRSYELFLDIRAALAETAGRVGALERTALEQLGAEERAAESIRDPEAAKERLERGDRDPDALTAMRELHGGLKLESKKQFEKTAYLEPLEYGYAEARRELERAIANVDAAKKLSQARVKDFLSSLLREREANDQELSRNLKTLKSVLAARSPKDVVAALNGAETLDAVVKIYADRLAEAEAENEAAIVGAETMEWLKFAAKTIDGSKMARETGGVGPTAAYAERLEKLCRARADADAKLKRLKDLYESFELALASAKEAGGKQKDESEDGWRRYEAAANNLLTSAEALGAQLRDEGNEQAGIKLLLLREPAAAAYEKGLENAAAVIKDVRTTLDDTSAGMRRLLTLYEAAKTEFAKPGLERLQKEISYAIAKYPVPKWFLALHAAVGKLVELRLGLYHAYEGLKISTIPYAPVAPESEYVMPDAALTAARVTAYMARSGKSVMTVTTHSLGIVGRAVVDEANQILEYKLCYATVSEKVAALWAAGSRLGAGQFGGLVLRDARDERGVEKFLGRGHAAVSLAATAAWLSGADTMITAELGSYVTFCATGHWPAMRDRKQLSMTVAACTTYCALAYATLTSTYGSAADTAVDSHGQFVPPEKFEAANTSGAVAAGAARGAKRKFALSIQDVLILLAACEPAHLTYFCRLDLLRQVEYMHKTLEAVLSRAVRDRVGVSCLEPPKADDTRKYMPVVMPAARGRFDKSYGACFAIDRHDWDSVKAPHYVGKMLEPWKTLPGTRENAERLERICGGTADAADGFTATLMMLAATAIPANLLEAMWALLGPRDEDLGENWQLGEGEVEGQWSGGAASAAAAAMLRFMLRRAAAVDNYTVATSGGTAGLALDSLSAKLLGPAGGSIMFLLKEDAVNLRRLLAFDVALLSILFGAKVVIAYETSALSRESGLLLCSSVFDARRGNRFADILCADHRACASDSAAAAADALKKIALADPNRIENACLLQQVEELASALHSKPLSYAQPFLFLANTSNQITQVLIPAKARPSEFFVTLRRDAAYEEVPLRRADRQAFPDEIDAKDIEGGDLFFSATVGGEVPVLDNPAHIAPAPPEYDRGEGNLFPFAGSRRSAPSEEEALSKAAGSKRNQIDAHGQNISQPARAGNTKIERASGKNRKTENNVTEHQTAARGRAAAPPTETKTTEKRQKCPPRESPLSRDERAPHDGLSAGAAEPRPPRGDSDDDRHKHETPHGVSDKAAEPPAVPSAEPRGPSTELIGGNWKSLPKTKPRRTSSGLRRKHQASASVHKHRTHGSSDDDSEDGEATYGFGSCRGRQRRSTLGGKKRSGTDRTAEFLKKATCVDKLEKFSRSGESPKAQNGTADVACDRLGERGNELSPPRAPASSPPPPGKQADHGIDQREIVPPNAQYGITTVVDPRQVRLPSSDDGDPAEEEDARDVEEGEEDVAGQWDSNYDVCLPTYDTDHAAQEEKDFDLASNNGTGGALPAADHAISAINDWVIADTDASAGVGTDWSEEDEDAPAADDGRSTNVEVATHGYTSDDSAADDESKRARATRDSSPPQHYPASPLAPSTPSSLPTPADTDNDTAILELDRNSGGDTDSNDDHAPPTDTGDAPPLCSEGELTPSTDEECAVVQDDARKKQENSSHERKDDGVRWEIDLDSDQGDYSDASDDCKIPDGPRVAPEKDIKNKQLEKSESDSCGGQGDPSTEPQQPLWEVYSPYDNSDSDDKAGNRKDPKLDGAALDMRSSRLRADAKSITSYVNDINEAVRDGGSAAAEFFARSEQSCIDSEDDARHLDKSRATLASDLDDHQSDQPRESLAPLDPETRSKMYTSLAVTCRLILRGMRHAQDAASAGVAELLTETNRIKMMLN.

Residues 10-242 (VAAASRSQFD…VEVISAALRA (233 aa)) form the Peptidase C76 domain. Catalysis depends on residues Cys-30, Asp-173, and His-175. Disordered regions lie at residues 287 to 374 (RGTA…GALA), 2407 to 2776 (NPAH…DSNY), 2829 to 3068 (AGVG…AALD), and 3128 to 3147 (ASDL…APLD). The span at 338-347 (KVKKPNKGKK) shows a compositional bias: basic residues. Residues 2470 to 2482 (KIERASGKNRKTE) are compositionally biased toward basic and acidic residues. Low complexity predominate over residues 2491–2503 (AARGRAAAPPTET). Basic and acidic residues-rich tracts occupy residues 2504-2527 (KTTE…RAPH) and 2538-2562 (RPPR…DKAA). 2 stretches are compositionally biased toward basic residues: residues 2588-2615 (PKTK…HRTH) and 2636-2648 (GRQR…GKKR). 2 stretches are compositionally biased toward basic and acidic residues: residues 2649 to 2672 (SGTD…KFSR) and 2687 to 2696 (ACDRLGERGN). Residues 2701 to 2712 (PRAPASSPPPPG) are compositionally biased toward pro residues. The span at 2714–2723 (QADHGIDQRE) shows a compositional bias: basic and acidic residues. 2 stretches are compositionally biased toward acidic residues: residues 2748–2768 (DDGD…EEDV) and 2835–2844 (WSEEDEDAPA). Residues 2850–2864 (STNVEVATHGYTSDD) are compositionally biased toward polar residues. A compositionally biased stretch (basic and acidic residues) spans 2869 to 2878 (DESKRARATR). Residues 2887 to 2903 (PASPLAPSTPSSLPTPA) show a composition bias toward low complexity. A compositionally biased stretch (basic and acidic residues) spans 2959-2981 (DDARKKQENSSHERKDDGVRWEI). Over residues 2982–2994 (DLDSDQGDYSDAS) the composition is skewed to acidic residues. 3 stretches are compositionally biased toward basic and acidic residues: residues 2995–3021 (DDCK…KSES), 3050–3062 (SDDK…DPKL), and 3131–3140 (LDDHQSDQPR).

It belongs to the herpesviridae large tegument protein family. In terms of assembly, interacts with host CUL1 and CUL4A; these interactions inhibit the E3 ligase activity of cullins. Interacts with inner tegument protein. Interacts with capsid vertex specific component CVC2. Interacts with the major capsid protein/MCP.

Its subcellular location is the virion tegument. It localises to the host cytoplasm. The protein localises to the host nucleus. The enzyme catalyses Thiol-dependent hydrolysis of ester, thioester, amide, peptide and isopeptide bonds formed by the C-terminal Gly of ubiquitin (a 76-residue protein attached to proteins as an intracellular targeting signal).. In terms of biological role, large tegument protein that plays multiple roles in the viral cycle. During viral entry, remains associated with the capsid while most of the tegument is detached and participates in the capsid transport toward the host nucleus. Plays a role in the routing of the capsid at the nuclear pore complex and subsequent uncoating. Within the host nucleus, acts as a deneddylase and promotes the degradation of nuclear CRLs (cullin-RING ubiquitin ligases) and thereby stabilizes nuclear CRL substrates, while cytoplasmic CRLs remain unaffected. These modifications prevent host cell cycle S-phase progression and create a favorable environment allowing efficient viral genome replication. Participates later in the secondary envelopment of capsids. Indeed, plays a linker role for the association of the outer viral tegument to the capsids together with the inner tegument protein. In Amazona oratrix (yellow-headed parrot), this protein is Large tegument protein deneddylase (UL36).